The chain runs to 610 residues: Estrogen receptor beta-2 (610 aa).

Residues 1-170 (MSSSTGPAPA…GILGKGDTHF (170 aa)) are modulating. 2 NR C4-type zinc fingers span residues 171–191 (CAVC…CEGC) and 207–231 (CPAT…LRKC). The segment at residues 171–236 (CAVCHDYASG…RLRKCYEVGM (66 aa)) is a DNA-binding region (nuclear receptor). Residues 302-538 (SPEQLVNCIL…DLLLEMLDAN (237 aa)) enclose the NR LBD domain. Residues 566–596 (HTSKQQPALKESNQDTRHSPQAEGTVDKTLH) are disordered. Positions 577–596 (SNQDTRHSPQAEGTVDKTLH) are enriched in basic and acidic residues.

The protein belongs to the nuclear hormone receptor family. NR3 subfamily. Binds DNA as a homodimer. Can form a heterodimer with ER-alpha. As to expression, predominantly expressed in pituitary, telencephalon and hypothalamus as well as in the liver.

Its subcellular location is the nucleus. Binds estrogens with an affinity similar to that of ER-alpha, and activates expression of reporter genes containing estrogen response elements (ERE) in an estrogen-dependent manner. The sequence is that of Estrogen receptor beta-2 (esr2b) from Carassius auratus (Goldfish).